Reading from the N-terminus, the 80-residue chain is U4-theraphotoxin-Spl1a (80 aa).

Residues 1–21 (MKASLFAVIFGLVVLCACSFA) form the signal peptide. Residues 22–50 (EDQFASPNELLKSMFVESTHELTPEVEGR) constitute a propeptide that is removed on maturation. 3 disulfide bridges follow: Cys-52-Cys-66, Cys-59-Cys-71, and Cys-65-Cys-75. Leu-79 bears the Leucine amide mark.

It belongs to the neurotoxin 30 (phrixotoxin) family. As to expression, expressed by the venom gland.

The protein resides in the secreted. Functionally, probable ion channel inhibitor. Shows insecticidal activity when injected into mealworms. This Selenotypus plumipes (Australian featherleg tarantula) protein is U4-theraphotoxin-Spl1a.